The primary structure comprises 305 residues: Dihydroorotate dehydrogenase B (NAD(+)), catalytic subunit (305 aa).

FMN contacts are provided by residues S23 and 47-48 (KG). Residues K47 and 71–75 (NAIGL) contribute to the substrate site. FMN-binding residues include N101 and N129. N129 serves as a coordination point for substrate. Residue C132 is the Nucleophile of the active site. K167 and I193 together coordinate FMN. Substrate is bound at residue 194–195 (NT). Residues G219, 245-246 (GG), and 267-268 (GT) contribute to the FMN site.

Belongs to the dihydroorotate dehydrogenase family. Type 1 subfamily. In terms of assembly, heterotetramer of 2 PyrK and 2 PyrD type B subunits. Requires FMN as cofactor.

The protein localises to the cytoplasm. The enzyme catalyses (S)-dihydroorotate + NAD(+) = orotate + NADH + H(+). It participates in pyrimidine metabolism; UMP biosynthesis via de novo pathway; orotate from (S)-dihydroorotate (NAD(+) route): step 1/1. Catalyzes the conversion of dihydroorotate to orotate with NAD(+) as electron acceptor. The protein is Dihydroorotate dehydrogenase B (NAD(+)), catalytic subunit (pyrD) of Geotalea daltonii (strain DSM 22248 / JCM 15807 / FRC-32) (Geobacter daltonii).